The chain runs to 125 residues: Succinate dehydrogenase cytochrome b556 subunit (125 aa).

The Cytoplasmic portion of the chain corresponds to 1–29 (MTKTKQEIYNKRPTSPHLTIYKPQISSTL). The helical transmembrane segment at 30–55 (SILHRMTGVALFFAVSILAWWFILSK) threads the bilayer. The Periplasmic portion of the chain corresponds to 56 to 68 (FDSNYIKLANCCC). The chain crosses the membrane as a helical span at residues 69-89 (IIKICLILTSFAWFYHLCNGI). His-84 is a binding site for heme. The Cytoplasmic segment spans residues 90 to 104 (RHLFWDIGLGFSIKA). The chain crosses the membrane as a helical span at residues 105-125 (VNLTGWSVVICSVLFTILLWV).

This sequence belongs to the cytochrome b560 family. In terms of assembly, part of an enzyme complex containing four subunits: a flavoprotein, an iron-sulfur protein, plus two membrane-anchoring proteins, SdhC and SdhD. The complex can form homotrimers. Requires heme as cofactor.

It is found in the cell inner membrane. Its pathway is carbohydrate metabolism; tricarboxylic acid cycle. In terms of biological role, membrane-anchoring subunit of succinate dehydrogenase (SDH). This is Succinate dehydrogenase cytochrome b556 subunit (sdhC) from Rickettsia bellii (strain RML369-C).